Consider the following 376-residue polypeptide: 1-acyl-sn-glycerol-3-phosphate acyltransferase gamma (376 aa).

Residues M1–R124 lie on the Cytoplasmic side of the membrane. Residues H96–D101 carry the HXXXXD motif motif. Residues E125–K145 traverse the membrane as a helical segment. The Lumenal segment spans residues R146–T316. The chain crosses the membrane as a helical span at residues I317 to L339. Residues T340 to E376 are Cytoplasmic-facing.

Belongs to the 1-acyl-sn-glycerol-3-phosphate acyltransferase family. In terms of tissue distribution, widely expressed. Mainly expressed in testis, kidney and liver (at protein level).

The protein resides in the endoplasmic reticulum membrane. It is found in the nucleus envelope. It carries out the reaction a 1-acyl-sn-glycero-3-phosphate + an acyl-CoA = a 1,2-diacyl-sn-glycero-3-phosphate + CoA. It catalyses the reaction pentadecanoyl-CoA + 1-(9Z-octadecenoyl)-sn-glycero-3-phosphate = 1-(9Z)-octadecenoyl-2-pentadecanoyl-sn-glycero-3-phosphate + CoA. The enzyme catalyses heptadecanoyl-CoA + 1-(9Z-octadecenoyl)-sn-glycero-3-phosphate = 1-(9Z)-octadecenoyl-2-heptadecanoyl-sn-glycero-3-phosphate + CoA. The catalysed reaction is 1-(9Z-octadecenoyl)-sn-glycero-3-phosphate + octadecanoyl-CoA = 1-(9Z-octadecenoyl)-2-octadecanoyl-sn-glycero-3-phosphate + CoA. It carries out the reaction nonadecanoyl-CoA + 1-(9Z-octadecenoyl)-sn-glycero-3-phosphate = 1-(9Z)-octadecenoyl-2-nonadecanoyl-sn-glycero-3-phosphate + CoA. It catalyses the reaction 1-(9Z-octadecenoyl)-sn-glycero-3-phosphate + (5Z,8Z,11Z,14Z)-eicosatetraenoyl-CoA = 1-(9Z)-octadecenoyl-2-(5Z,8Z,11Z,14Z)-eicosatetraenoyl-sn-glycero-3-phosphate + CoA. The enzyme catalyses 1-(9Z-octadecenoyl)-sn-glycero-3-phosphate + (9Z)-octadecenoyl-CoA = 1,2-di-(9Z-octadecenoyl)-sn-glycero-3-phosphate + CoA. The catalysed reaction is 1-(9Z-octadecenoyl)-sn-glycero-3-phosphate + (9Z,12Z)-octadecadienoyl-CoA = 1-(9Z)-octadecenoyl-2-(9Z,12Z)-octadecadienoyl-sn-glycero-3-phosphate + CoA. It carries out the reaction 1-(9Z-octadecenoyl)-sn-glycero-3-phosphocholine + (5Z,8Z,11Z,14Z)-eicosatetraenoyl-CoA = 1-(9Z)-octadecenoyl-2-(5Z,8Z,11Z,14Z)-icosatetraenoyl-sn-glycero-3-phosphocholine + CoA. It catalyses the reaction 1-(9Z-octadecenoyl)-sn-glycero-3-phospho-(1D-myo-inositol) + (5Z,8Z,11Z,14Z)-eicosatetraenoyl-CoA = 1-(9Z-octadecenoyl)-2-(5Z,8Z,11Z,14Z-eicosatetraenoyl)-sn-glycero-3-phospho-1D-myo-inositol + CoA. The enzyme catalyses 1-(9Z-octadecenoyl)-sn-glycero-3-phospho-L-serine + (5Z,8Z,11Z,14Z)-eicosatetraenoyl-CoA = 1-(9Z-octadecenoyl)-2-(5Z,8Z,11Z,14Z-eicosatetraenoyl)-sn-glycero-3-phospho-L-serine + CoA. The catalysed reaction is 1-hexadecanoyl-sn-glycero-3-phosphate + (9Z)-octadecenoyl-CoA = 1-hexadecanoyl-2-(9Z-octadecenoyl)-sn-glycero-3-phosphate + CoA. It carries out the reaction 1-hexadecanoyl-sn-glycero-3-phosphate + (5Z,8Z,11Z,14Z)-eicosatetraenoyl-CoA = 1-hexadecanoyl-2-(5Z,8Z,11Z,14Z-eicosatetraenoyl)-sn-glycero-3-phosphate + CoA. It catalyses the reaction 1-heptadecanoyl-sn-glycero-3-phosphate + (5Z,8Z,11Z,14Z)-eicosatetraenoyl-CoA = 1-heptadecanoyl-2-(5Z,8Z,11Z,14Z)-eicosatetraenoyl-sn-glycero-3-phosphate + CoA. The enzyme catalyses 1-octadecanoyl-sn-glycero-3-phosphate + (9Z)-octadecenoyl-CoA = 1-octadecanoyl-2-(9Z-octadecenoyl)-sn-glycero-3-phosphate + CoA. The catalysed reaction is 1-octadecanoyl-sn-glycero-3-phosphate + (5Z,8Z,11Z,14Z)-eicosatetraenoyl-CoA = 1-octadecanoyl-2-(5Z,8Z,11Z,14Z-eicosatetraenoyl)-sn-glycero-3-phosphate + CoA. It carries out the reaction 1-(9Z-octadecenoyl)-sn-glycero-3-phosphate + hexadecanoyl-CoA = 1-hexadecanoyl-2-(9Z-octadecenoyl)-sn-glycero-3-phosphate + CoA. It catalyses the reaction 1-O-(9Z-octadecenyl)-sn-glycero-3-phosphate + (5Z,8Z,11Z,14Z)-eicosatetraenoyl-CoA = 1-O-(9Z-octadecenyl)-2-(5Z,8Z,11Z,14Z-eicosatetraenoyl)-sn-glycero-3-phosphate + CoA. The enzyme catalyses a 1-acyl-sn-glycero-3-phospho-(1D-myo-inositol) + (5Z,8Z,11Z,14Z)-eicosatetraenoyl-CoA = a 1-acyl-2-(5Z,8Z,11Z,14Z-eicosatetraenoyl)-sn-glycero-3-phospho-(1D-myo-inositol) + CoA. It participates in phospholipid metabolism; CDP-diacylglycerol biosynthesis; CDP-diacylglycerol from sn-glycerol 3-phosphate: step 2/3. With respect to regulation, in males, activity increases in an age-dependent fashion, maybe derived from the induction by sex-hormones. Converts 1-acyl-sn-glycerol-3-phosphate (lysophosphatidic acid or LPA) into 1,2-diacyl-sn-glycerol-3-phosphate (phosphatidic acid or PA) by incorporating an acyl moiety at the sn-2 position of the glycerol backbone. Acts on LPA containing saturated or unsaturated fatty acids C16:0-C20:4 at the sn-1 position using C18:1, C20:4 or C18:2-CoA as the acyl donor. Also acts on lysophosphatidylcholine, lysophosphatidylinositol and lysophosphatidylserine using C18:1 or C20:4-CoA. Has a preference for arachidonoyl-CoA as a donor. Also has a modest lysophosphatidylinositol acyltransferase (LPIAT) activity, converts lysophosphatidylinositol (LPI) into phosphatidylinositol. In Mus musculus (Mouse), this protein is 1-acyl-sn-glycerol-3-phosphate acyltransferase gamma.